Here is a 249-residue protein sequence, read N- to C-terminus: Glucosamine-6-phosphate deaminase (249 aa).

The Proton acceptor; for enolization step role is filled by Asp67. The active-site For ring-opening step is the Asn136. His138 (proton acceptor; for ring-opening step) is an active-site residue. The For ring-opening step role is filled by Glu143.

It belongs to the glucosamine/galactosamine-6-phosphate isomerase family. NagB subfamily.

It catalyses the reaction alpha-D-glucosamine 6-phosphate + H2O = beta-D-fructose 6-phosphate + NH4(+). It functions in the pathway amino-sugar metabolism; N-acetylneuraminate degradation; D-fructose 6-phosphate from N-acetylneuraminate: step 5/5. Its function is as follows. Catalyzes the reversible isomerization-deamination of glucosamine 6-phosphate (GlcN6P) to form fructose 6-phosphate (Fru6P) and ammonium ion. The protein is Glucosamine-6-phosphate deaminase of Clostridioides difficile (strain 630) (Peptoclostridium difficile).